Consider the following 176-residue polypeptide: Thiol:disulfide interchange protein HelX (176 aa).

The first 19 residues, 1–19, serve as a signal peptide directing secretion; sequence MAKPLMFLPLLVMAGFVGA. Residues 35–172 form the Thioredoxin domain; the sequence is ALAGKEAPAV…ITKKIDPLLA (138 aa). An intrachain disulfide couples C75 to C78.

The protein belongs to the thioredoxin family. DsbE subfamily.

The protein resides in the periplasm. Functionally, required for disulfide bond formation in some periplasmic proteins. Also acts as a disulfide oxidoreductase in cytochromes c biogenesis. The cysteines of apocytochromes c must be in the reduced state for covalent linkage between the two moieties to occur. The protein is Thiol:disulfide interchange protein HelX (helX) of Rhodobacter capsulatus (strain ATCC BAA-309 / NBRC 16581 / SB1003).